Here is a 240-residue protein sequence, read N- to C-terminus: UDP-2,3-diacylglucosamine hydrolase (240 aa).

Mn(2+) contacts are provided by D8, H10, D41, N79, and H114. 79–80 (NR) contacts substrate. D122, S160, N164, K167, and H195 together coordinate substrate. Residues H195 and H197 each contribute to the Mn(2+) site.

This sequence belongs to the LpxH family. It depends on Mn(2+) as a cofactor.

It is found in the cell inner membrane. The catalysed reaction is UDP-2-N,3-O-bis[(3R)-3-hydroxytetradecanoyl]-alpha-D-glucosamine + H2O = 2-N,3-O-bis[(3R)-3-hydroxytetradecanoyl]-alpha-D-glucosaminyl 1-phosphate + UMP + 2 H(+). Its pathway is glycolipid biosynthesis; lipid IV(A) biosynthesis; lipid IV(A) from (3R)-3-hydroxytetradecanoyl-[acyl-carrier-protein] and UDP-N-acetyl-alpha-D-glucosamine: step 4/6. Hydrolyzes the pyrophosphate bond of UDP-2,3-diacylglucosamine to yield 2,3-diacylglucosamine 1-phosphate (lipid X) and UMP by catalyzing the attack of water at the alpha-P atom. Involved in the biosynthesis of lipid A, a phosphorylated glycolipid that anchors the lipopolysaccharide to the outer membrane of the cell. The polypeptide is UDP-2,3-diacylglucosamine hydrolase (Photorhabdus laumondii subsp. laumondii (strain DSM 15139 / CIP 105565 / TT01) (Photorhabdus luminescens subsp. laumondii)).